Here is a 179-residue protein sequence, read N- to C-terminus: Large ribosomal subunit protein uL5 (179 aa).

Belongs to the universal ribosomal protein uL5 family. Part of the 50S ribosomal subunit; part of the 5S rRNA/L5/L18/L25 subcomplex. Contacts the 5S rRNA and the P site tRNA. Forms a bridge to the 30S subunit in the 70S ribosome.

This is one of the proteins that bind and probably mediate the attachment of the 5S RNA into the large ribosomal subunit, where it forms part of the central protuberance. In the 70S ribosome it contacts protein S13 of the 30S subunit (bridge B1b), connecting the 2 subunits; this bridge is implicated in subunit movement. Contacts the P site tRNA; the 5S rRNA and some of its associated proteins might help stabilize positioning of ribosome-bound tRNAs. This chain is Large ribosomal subunit protein uL5, found in Ruthia magnifica subsp. Calyptogena magnifica.